A 360-amino-acid chain; its full sequence is MNAPLCGIWLWLPLLLTWLTPEVSSSWWYMRATSGSSRVMCDNVPGLVSRQRQLCHRHPDVMRAIGLGVAEWTAECQHQFRQHRWNCNTLDRDHSLFGRVLLRSSRESAFVYAISSAGVVFAITRACSQGELKSCSCDPKKKGTAKDSKGTFDWGGCSDNIDYGIKFARAFVDAKERKGKDARALMNLHNNRAGRKAVKRFLKQECKCHGVSGSCTLRTCWLAMADFRKTGSYLWRKYNGAIQVVMNQDGTGFTVANKRFKKPTKNDLVYFENSPDYCIRDREAGSLGTAGRVCNLTSRGMDSCEVMCCGRGYDTSRVTRMTKCECKFHWCCAVRCQDCLEALDVHTCKAPKNADWTTPT.

The first 25 residues, 1-25 (MNAPLCGIWLWLPLLLTWLTPEVSS), serve as a signal peptide directing secretion. Intrachain disulfides connect C76/C87, C127/C135, C137/C157, C206/C220, C208/C215, C278/C309, C294/C304, C308/C348, C324/C339, C326/C336, and C331/C332. S212 is lipidated: O-palmitoleoyl serine; by PORCN. An N-linked (GlcNAc...) asparagine glycan is attached at N295.

This sequence belongs to the Wnt family. Post-translationally, palmitoleoylation is required for efficient binding to frizzled receptors. Depalmitoleoylation leads to Wnt signaling pathway inhibition.

The protein localises to the secreted. It is found in the extracellular space. The protein resides in the extracellular matrix. Ligand for members of the frizzled family of seven transmembrane receptors. Functions in the canonical Wnt signaling pathway that results in activation of transcription factors of the TCF/LEF family. Functions as a upstream regulator of FGF10 expression. Plays an important role in embryonic lung development. May contribute to embryonic brain development by regulating the proliferation of dopaminergic precursors and neurons. This is Protein Wnt-2 (WNT2) from Otolemur garnettii (Small-eared galago).